The chain runs to 745 residues: Ankyrin repeat and protein kinase domain-containing protein 1 (745 aa).

A Protein kinase domain is found at glutamate 34–leucine 301. ATP-binding positions include valine 40–valine 48 and lysine 63. Residue aspartate 157 is the Proton acceptor of the active site. 11 ANK repeats span residues asparagine 369–cysteine 398, serine 402–leucine 431, aspartate 435–alanine 464, glutamate 468–proline 497, glutamate 501–alanine 530, asparagine 534–alanine 563, serine 567–leucine 596, glutamine 600–alanine 629, methionine 633–alanine 662, serine 666–alanine 695, and valine 699–valine 728.

It belongs to the protein kinase superfamily. TKL Ser/Thr protein kinase family.

It catalyses the reaction L-seryl-[protein] + ATP = O-phospho-L-seryl-[protein] + ADP + H(+). The catalysed reaction is L-threonyl-[protein] + ATP = O-phospho-L-threonyl-[protein] + ADP + H(+). The polypeptide is Ankyrin repeat and protein kinase domain-containing protein 1 (Ankk1) (Mus musculus (Mouse)).